The following is a 324-amino-acid chain: Homoserine kinase (324 aa).

Residue 100 to 110 (PLSSGMGSSAA) participates in ATP binding.

Belongs to the GHMP kinase family. Homoserine kinase subfamily.

It localises to the cytoplasm. The enzyme catalyses L-homoserine + ATP = O-phospho-L-homoserine + ADP + H(+). The protein operates within amino-acid biosynthesis; L-threonine biosynthesis; L-threonine from L-aspartate: step 4/5. Catalyzes the ATP-dependent phosphorylation of L-homoserine to L-homoserine phosphate. This Chlorobaculum tepidum (strain ATCC 49652 / DSM 12025 / NBRC 103806 / TLS) (Chlorobium tepidum) protein is Homoserine kinase.